Reading from the N-terminus, the 619-residue chain is ESX-2 secretion system protein EccA2 (619 aa).

373 to 380 (GPPGTGKT) contributes to the ATP binding site.

The protein belongs to the CbxX/CfxQ family. As to quaternary structure, part of the ESX-2 / type VII secretion system (T7SS), which is composed of cytosolic and membrane components. Residues 522-619 interact with an artificial EsxB-EsxA heterodimer from the adjacent ESX-1 locus.

The protein resides in the cytoplasm. In terms of biological role, shows ATPase activity. Could provide energy for export of ESX-2 substrates. The protein is ESX-2 secretion system protein EccA2 (eccA2) of Mycobacterium tuberculosis (strain ATCC 25618 / H37Rv).